Reading from the N-terminus, the 357-residue chain is UPF0324 membrane protein BMEI1914 (357 aa).

11 consecutive transmembrane segments (helical) span residues 29 to 48, 58 to 77, 90 to 112, 117 to 136, 149 to 171, 181 to 203, 210 to 232, 242 to 261, 268 to 290, 300 to 322, and 334 to 356; these read NILPGLGLSVAITAAAMVLE, AWLEALVIAILLGTAVRSLA, SAKLLLEIAVVLLGASISASAVI, GLIFGIAAVVAVAITLSYGI, LVACGNSICGNSAIAAMAPVIGA, AFTAILGVIVVLTLPLLVPLLGL, ILAGLTVYAVPQVLAATAPVSLL, LVRVLMLGPVILVFALISGN, PGFFQLVPWFIIGFLAMMALHSL, AIQYASMLLTIISMAALGLGVDI, and LTAILSLIALCCISLGLIHMLGV.

This sequence belongs to the UPF0324 family.

It localises to the cell membrane. This Brucella melitensis biotype 1 (strain ATCC 23456 / CCUG 17765 / NCTC 10094 / 16M) protein is UPF0324 membrane protein BMEI1914.